The sequence spans 574 residues: Glutamyl-tRNA(Gln) amidotransferase subunit B, mitochondrial (574 aa).

The transit peptide at 1–12 (MIRQFVSHRGIP) directs the protein to the mitochondrion. A disordered region spans residues 34–62 (PLGRKNWSTSDEAKSKRAAMRKGGAPPPE).

This sequence belongs to the GatB/GatE family. GatB subfamily. Subunit of the heterotrimeric GatCAB amidotransferase (AdT) complex, composed of A, B and C subunits.

The protein resides in the mitochondrion. It carries out the reaction L-glutamyl-tRNA(Gln) + L-glutamine + ATP + H2O = L-glutaminyl-tRNA(Gln) + L-glutamate + ADP + phosphate + H(+). In terms of biological role, allows the formation of correctly charged Gln-tRNA(Gln) through the transamidation of misacylated Glu-tRNA(Gln) in the mitochondria. The reaction takes place in the presence of glutamine and ATP through an activated gamma-phospho-Glu-tRNA(Gln). The sequence is that of Glutamyl-tRNA(Gln) amidotransferase subunit B, mitochondrial from Ajellomyces capsulatus (strain H143) (Darling's disease fungus).